The following is a 340-amino-acid chain: Probable serine acetyltransferase 5 (340 aa).

Composition is skewed to low complexity over residues 1–17 (MLVV…RVAA) and 54–64 (PAEVVPAFAPP). Residues 1–67 (MLVVVARKSS…VPAFAPPESE (67 aa)) form a disordered region.

Belongs to the transferase hexapeptide repeat family. Homomultimer.

The catalysed reaction is L-serine + acetyl-CoA = O-acetyl-L-serine + CoA. It participates in amino-acid biosynthesis; L-cysteine biosynthesis; L-cysteine from L-serine: step 1/2. The protein is Probable serine acetyltransferase 5 (SAT5) of Oryza sativa subsp. japonica (Rice).